We begin with the raw amino-acid sequence, 430 residues long: Small ribosomal subunit protein uS9m (430 aa).

A mitochondrion-targeting transit peptide spans 1–34 (MLSRLFLRHSNLRFVTLVSSKSNSQIFSSFIRPL). The tract at residues 32-97 (RPLSTNSSGG…GGEGKWPEEP (66 aa)) is disordered. Positions 39–48 (SGGGGNGDGN) are enriched in gly residues. A compositionally biased stretch (low complexity) spans 68–79 (GPFSSDDSFGSS). The segment covering 80–91 (GVAGSGLPGGEG) has biased composition (gly residues).

Belongs to the universal ribosomal protein uS9 family. As to quaternary structure, interacts (via C terminus) with PIA2. Component of the mitochondrial ribosome small subunit. Expressed in root tips, young leaves, flowers and siliques.

The protein resides in the mitochondrion. Mitochondrial ribosomal protein required for central cell maturation. May work together with PIA2 in controlling female gametophyte development, possibly by regulating the expression of some mitochondrial proteins. This is Small ribosomal subunit protein uS9m from Arabidopsis thaliana (Mouse-ear cress).